The sequence spans 61 residues: Large ribosomal subunit protein uL30 (61 aa).

Belongs to the universal ribosomal protein uL30 family. Part of the 50S ribosomal subunit.

The polypeptide is Large ribosomal subunit protein uL30 (Latilactobacillus sakei subsp. sakei (strain 23K) (Lactobacillus sakei subsp. sakei)).